A 475-amino-acid polypeptide reads, in one-letter code: Ribulose bisphosphate carboxylase large chain (475 aa).

Positions 1–2 (MS) are excised as a propeptide. P3 bears the N-acetylproline mark. K14 is modified (N6,N6,N6-trimethyllysine). Positions 123 and 173 each coordinate substrate. K175 acts as the Proton acceptor in catalysis. Residue K177 coordinates substrate. Residues K201, D203, and E204 each coordinate Mg(2+). At K201 the chain carries N6-carboxylysine. Catalysis depends on H294, which acts as the Proton acceptor. Substrate-binding residues include R295, H327, and S379.

Belongs to the RuBisCO large chain family. Type I subfamily. Heterohexadecamer of 8 large chains and 8 small chains; disulfide-linked. The disulfide link is formed within the large subunit homodimers. The cofactor is Mg(2+). Post-translationally, the disulfide bond which can form in the large chain dimeric partners within the hexadecamer appears to be associated with oxidative stress and protein turnover.

Its subcellular location is the plastid. It is found in the chloroplast. It catalyses the reaction 2 (2R)-3-phosphoglycerate + 2 H(+) = D-ribulose 1,5-bisphosphate + CO2 + H2O. The enzyme catalyses D-ribulose 1,5-bisphosphate + O2 = 2-phosphoglycolate + (2R)-3-phosphoglycerate + 2 H(+). Functionally, ruBisCO catalyzes two reactions: the carboxylation of D-ribulose 1,5-bisphosphate, the primary event in carbon dioxide fixation, as well as the oxidative fragmentation of the pentose substrate in the photorespiration process. Both reactions occur simultaneously and in competition at the same active site. This chain is Ribulose bisphosphate carboxylase large chain, found in Pinus radiata (Monterey pine).